Here is a 59-residue protein sequence, read N- to C-terminus: Insulin (59 aa).

Cystine bridges form between C7-C45, C19-C58, and C44-C49.

This sequence belongs to the insulin family. In terms of assembly, heterodimer of a B chain and an A chain linked by two disulfide bonds.

The protein resides in the secreted. Functionally, insulin decreases blood glucose concentration. It increases cell permeability to monosaccharides, amino acids and fatty acids. It accelerates glycolysis, the pentose phosphate cycle, and glycogen synthesis in liver. The protein is Insulin (ins) of Chimaera monstrosa (Rabbit fish).